The primary structure comprises 420 residues: UDP-N-acetylglucosamine 1-carboxyvinyltransferase 2 (420 aa).

22-23 provides a ligand contact to phosphoenolpyruvate; sequence KN. UDP-N-acetyl-alpha-D-glucosamine is bound at residue Arg-92. Cys-116 acts as the Proton donor in catalysis. Cys-116 is modified (2-(S-cysteinyl)pyruvic acid O-phosphothioketal). UDP-N-acetyl-alpha-D-glucosamine contacts are provided by residues 121 to 125, Asp-307, and Ile-329; that span reads RPIDL.

The protein belongs to the EPSP synthase family. MurA subfamily.

The protein resides in the cytoplasm. The catalysed reaction is phosphoenolpyruvate + UDP-N-acetyl-alpha-D-glucosamine = UDP-N-acetyl-3-O-(1-carboxyvinyl)-alpha-D-glucosamine + phosphate. The protein operates within cell wall biogenesis; peptidoglycan biosynthesis. Cell wall formation. Adds enolpyruvyl to UDP-N-acetylglucosamine. In Streptococcus thermophilus (strain CNRZ 1066), this protein is UDP-N-acetylglucosamine 1-carboxyvinyltransferase 2.